The primary structure comprises 1149 residues: Guanine nucleotide exchange factor DBS (1149 aa).

Residues 52–224 (AATASDEIMH…DLGGTLDYCH (173 aa)) enclose the CRAL-TRIO domain. The Spectrin repeat unit spans residues 351–456 (LQLRHFEQGF…VTRRRGLLSK (106 aa)). 4 positions are modified to phosphoserine: Ser-457, Ser-462, Ser-471, and Ser-480. The stretch at 503–529 (LETGAENKIQELNEIYKEYECILNQDL) forms a coiled coil. The segment at 555–627 (KKLAAKQTRP…RTSSTGEEEE (73 aa)) is disordered. Residues 583–594 (PGSWRSSENSSS) are compositionally biased toward low complexity. The span at 607–616 (AKSEMSEPRQ) shows a compositional bias: basic and acidic residues. Ser-621 carries the phosphoserine modification. Phosphothreonine is present on Thr-622. One can recognise a DH domain in the interval 632–812 (LRRHVMNELL…LGILKAVNDS (181 aa)). The PH domain maps to 841–950 (TDHKKGHTKV…IRKVLTSQLQ (110 aa)). Positions 956–1033 (SQHRALEQSH…EAPEEDGGWS (78 aa)) are disordered. A compositionally biased stretch (low complexity) spans 966 to 978 (SLPLPTPSSTSPT). Residues Ser-1033, Ser-1034, Ser-1041, and Ser-1042 each carry the phosphoserine modification. Residues 1055–1116 (LVPGKYTVVM…PASSLSTLLG (62 aa)) form the SH3 domain.

Belongs to the MCF2 family. As to quaternary structure, interacts with GTP-bound RAC1. Interacts with CDC42. Interacts with RHOA. Interacts with CCPG1, which results in specific inhibition of its exchange activity toward RHOA, but does not affect its activity on CDC42. In terms of tissue distribution, expressed at low levels in several hemopoietic cell lines and in thymus and spleen, and at higher levels in other tissues, particularly in brain.

The protein localises to the cytoplasm. It localises to the cell membrane. Its function is as follows. Guanine nucleotide exchange factor that catalyzes guanine nucleotide exchange on RHOA and CDC42, and thereby contributes to the regulation of RHOA and CDC42 signaling pathways. Seems to lack activity with RAC1. Becomes activated and highly tumorigenic by truncation of the N-terminus. This chain is Guanine nucleotide exchange factor DBS (Mcf2l), found in Mus musculus (Mouse).